The primary structure comprises 135 residues: Probable transporter PD_1892 (135 aa).

4 helical membrane passes run 4 to 24 (YWYP…LLLL), 45 to 65 (AQNI…TVIF), 71 to 91 (VTVA…GLGT), and 114 to 134 (IVAT…MGVY).

The protein belongs to the TsuA/YedE (TC 9.B.102) family.

The protein resides in the cell inner membrane. The protein is Probable transporter PD_1892 of Xylella fastidiosa (strain Temecula1 / ATCC 700964).